Reading from the N-terminus, the 376-residue chain is Growth/differentiation factor 8 (376 aa).

A signal peptide spans 1–22 (MHLSQIVLYLSLLIALGPVVLS). The propeptide occupies 23-267 (DQEAHQQPSV…ISEGPRRARR (245 aa)). 4 disulfide bridges follow: Cys273–Cys283, Cys282–Cys341, Cys310–Cys373, and Cys314–Cys375.

The protein belongs to the TGF-beta family. As to quaternary structure, homodimer; disulfide-linked. In terms of tissue distribution, highly expressed in muscle. Also expressed in other tissues such as eye, gill, ovary, gut and brain. Very low level detected in testis. Not expressed in liver, kidney, stomach or heart.

It is found in the secreted. Functionally, acts specifically as a negative regulator of skeletal muscle growth. This chain is Growth/differentiation factor 8, found in Oreochromis mossambicus (Mozambique tilapia).